Here is a 308-residue protein sequence, read N- to C-terminus: Methionyl-tRNA formyltransferase (308 aa).

109–112 provides a ligand contact to (6S)-5,6,7,8-tetrahydrofolate; sequence SLLP.

Belongs to the Fmt family.

The catalysed reaction is L-methionyl-tRNA(fMet) + (6R)-10-formyltetrahydrofolate = N-formyl-L-methionyl-tRNA(fMet) + (6S)-5,6,7,8-tetrahydrofolate + H(+). Its function is as follows. Attaches a formyl group to the free amino group of methionyl-tRNA(fMet). The formyl group appears to play a dual role in the initiator identity of N-formylmethionyl-tRNA by promoting its recognition by IF2 and preventing the misappropriation of this tRNA by the elongation apparatus. The polypeptide is Methionyl-tRNA formyltransferase (Phenylobacterium zucineum (strain HLK1)).